Here is a 639-residue protein sequence, read N- to C-terminus: Chaperone protein DnaK (639 aa).

The residue at position 197 (threonine 197) is a Phosphothreonine; by autocatalysis. Basic and acidic residues-rich tracts occupy residues 514–529 and 540–553; these read AEEN…DLVE and GTEK…EKVD. Disordered stretches follow at residues 514–554 and 603–639; these read AEEN…KVDP and DKAE…RKRG. The segment covering 612-633 has biased composition (acidic residues); the sequence is APEEEERGVDEDIVDADFEDLD.

This sequence belongs to the heat shock protein 70 family.

Its function is as follows. Acts as a chaperone. The protein is Chaperone protein DnaK of Jannaschia sp. (strain CCS1).